A 317-amino-acid chain; its full sequence is UV DNA damage endonuclease (317 aa).

Belongs to the uve1/UvsE family.

Component in a DNA repair pathway. Removal of UV LIGHT damaged nucleotides. Recognizes pyrimidine dimers and cleave a phosphodiester bond immediately 5' to the lesion. This chain is UV DNA damage endonuclease, found in Bacillus cereus (strain Q1).